The sequence spans 111 residues: Universal stress protein B (111 aa).

Transmembrane regions (helical) follow at residues 1–21 (MIST…NMAR) and 90–110 (FILT…LMLW).

This sequence belongs to the universal stress protein B family.

It is found in the cell inner membrane. This Yersinia pseudotuberculosis serotype O:1b (strain IP 31758) protein is Universal stress protein B.